A 272-amino-acid polypeptide reads, in one-letter code: Undecaprenyl-diphosphatase (272 aa).

8 consecutive transmembrane segments (helical) span residues 5–25, 45–65, 88–108, 115–135, 152–171, 189–209, 221–241, and 251–271; these read YSLFVAFVLGVVEGLTEFLPV, AKTFEVIIQLGSILAVVVVFW, HLTLGHILLAMIPAVGLGLAF, LFNPQSVMYALVAGGLLLLAA, TYRQAFAIGCFQCLALWPGF, YAASEFSFILAVPMMLGASGL, GDLPMFAVGFITAFVVALIAI, and ISFVPFAIYRFIVAAAVYWVF.

It belongs to the UppP family.

Its subcellular location is the cell inner membrane. It carries out the reaction di-trans,octa-cis-undecaprenyl diphosphate + H2O = di-trans,octa-cis-undecaprenyl phosphate + phosphate + H(+). Catalyzes the dephosphorylation of undecaprenyl diphosphate (UPP). Confers resistance to bacitracin. In Yersinia enterocolitica serotype O:8 / biotype 1B (strain NCTC 13174 / 8081), this protein is Undecaprenyl-diphosphatase.